Here is a 2273-residue protein sequence, read N- to C-terminus: Nonribosomal peptide synthetase hasD (2273 aa).

The segment at Phe-100–Phe-446 is adenylation 1. In terms of domain architecture, Carrier 1 spans Glu-588 to Ser-664. Ser-625 carries the post-translational modification O-(pantetheine 4'-phosphoryl)serine. The condensation 1 stretch occupies residues Ile-696–Asn-1120. The interval Glu-1156–Leu-1487 is adenylation 2. A Carrier 2 domain is found at Asp-1634–Val-1714. Ser-1673 carries the post-translational modification O-(pantetheine 4'-phosphoryl)serine. The tract at residues Gly-1735 to Asp-2127 is condensation 2. A disordered region spans residues Pro-2174–Gln-2200. The segment covering Glu-2186–Gln-2200 has biased composition (polar residues). The Carrier 3 domain maps to Gln-2201–Ile-2273. Residue Ser-2235 is modified to O-(pantetheine 4'-phosphoryl)serine.

It belongs to the NRP synthetase family. Requires pantetheine 4'-phosphate as cofactor.

Its pathway is secondary metabolite biosynthesis. Nonribosomal peptide synthetase; part of the gene cluster that mediates the biosynthesis of hexadehydro-astechrome (HAS), a tryptophan-derived iron(III)-complex that acts as a virulence factor in infected mice. Within the pathway, the NRPS condenses tryptophan and alanine to produce the Trp-Ala dipeptide. The 7-dimethylallyltryptophan synthase hasE then catalyzes the prenylation of the hasD-tethered tryptophan or the resulting tethered Trp-Ala dipeptide at the C-7 position of the indole moiety. HAS biosynthesis continues via tethered intermediates with the succesive actions of the cytochrome P450 monooxygenase hasH, the O-methyltransferase hasC, and the FAD-linked oxidoreductase hasG. The resulting O-methylated diketopiperazine is then released from hasD. Finally, three O-methylated diketopiperazine molecules assemble in a trimeric complex with Fe(III) to produce hexadehydro-astechrome. The polypeptide is Nonribosomal peptide synthetase hasD (Aspergillus fumigatus (strain CBS 144.89 / FGSC A1163 / CEA10) (Neosartorya fumigata)).